The sequence spans 237 residues: Cell division cycle-associated protein 4 (237 aa).

Residues 26–73 (YSLQRQSLLDMSLVKLQLCHMLVEPNLCRSVLIANTVRQIQEEMSQDG) form the SERTA domain.

Expressed preferentially in hematopoietic progenitors and mature blood cells. Expressed at low levels in the heart, lung, spleen, and thymus and at a higher level in muscle.

The protein localises to the nucleus. Its function is as follows. May participate in the regulation of cell proliferation through the E2F/RB pathway. May be involved in molecular regulation of hematopoietic stem cells and progenitor cell lineage commitment and differentiation. The sequence is that of Cell division cycle-associated protein 4 (Cdca4) from Mus musculus (Mouse).